A 433-amino-acid chain; its full sequence is Glutamate-1-semialdehyde 2,1-aminomutase (433 aa).

K271 carries the post-translational modification N6-(pyridoxal phosphate)lysine.

It belongs to the class-III pyridoxal-phosphate-dependent aminotransferase family. HemL subfamily. As to quaternary structure, homodimer. The cofactor is pyridoxal 5'-phosphate.

It localises to the cytoplasm. It catalyses the reaction (S)-4-amino-5-oxopentanoate = 5-aminolevulinate. It functions in the pathway porphyrin-containing compound metabolism; protoporphyrin-IX biosynthesis; 5-aminolevulinate from L-glutamyl-tRNA(Glu): step 2/2. Its pathway is porphyrin-containing compound metabolism; chlorophyll biosynthesis. The polypeptide is Glutamate-1-semialdehyde 2,1-aminomutase (Prochlorococcus marinus (strain AS9601)).